A 605-amino-acid polypeptide reads, in one-letter code: Podocalyxin-like protein 2 (605 aa).

Residues 1–32 (MGRLLRAARLPPLLSPLLLLLVGGAFLGACVA) form the signal peptide. Residues 33–500 (GSDEPGPEGL…ASQVRSDYGT (468 aa)) lie on the Extracellular side of the membrane. O-linked (Xyl...) (chondroitin sulfate) serine glycosylation occurs at Ser-79. Tyr-97 and Tyr-118 each carry sulfotyrosine. Positions 129–134 (SIEDTS) are O-glycosylated at one site. The segment at 129–347 (SIEDTSQAQE…PGDMELTPSS (219 aa)) is disordered. Residue Ser-144 is glycosylated (O-linked (GalNAc...) serine). Over residues 162–189 (EEEEEEEEEEEREKEEVEKQEEEEEEEL) the composition is skewed to acidic residues. N-linked (GlcNAc...) asparagine glycosylation occurs at Asn-193. Polar residues predominate over residues 207–217 (SLTSSSQTPGA). 2 stretches are compositionally biased toward low complexity: residues 241 to 255 (PSLLLPSVTPTTVTP) and 288 to 298 (EATAGAAGLSG). Asn-395 carries N-linked (GlcNAc...) asparagine glycosylation. A helical membrane pass occupies residues 501-521 (LFVVLVVIGAICIIIIALGLL). Topologically, residues 522 to 605 (YNCWQRRLPK…SDVFEEDTHL (84 aa)) are cytoplasmic. The interval 554–605 (LDVASDSQSEMQEKHPSLNGGGALNGPGSWGALMGGKRDPEDSDVFEEDTHL) is disordered. Ser-570 carries the post-translational modification Phosphoserine. Gly residues predominate over residues 572 to 582 (NGGGALNGPGS). Over residues 594–605 (EDSDVFEEDTHL) the composition is skewed to acidic residues. Position 596 is a phosphoserine (Ser-596).

It belongs to the podocalyxin family. As to quaternary structure, homodimer; disulfide-linked. Interacts with SELL, SELE and SELP. Post-translationally, O-glycosylated; contains chondroitin sulfate. Displays sialylated O-linked oligosaccharides. In terms of processing, sulfation is necessary for interaction with SELL. Sialylated O-linked oligosaccharides are necessary for interaction with SELL, SELE and SELP. Expressed in T-cells, B-cells and monocytes. Expression is higher on memory and germinal center cells than on naive B-cells (at protein level). Highly expressed in brain. Moderately expressed in pancreas, kidney and lymphoid node. Weakly expressed in liver. Detected in both endothelial cells and CD34+ bone marrow cells.

It localises to the membrane. Functionally, acts as a ligand for vascular selectins. Mediates rapid rolling of leukocytes over vascular surfaces through high affinity divalent cation-dependent interactions with E-, P- and L-selectins. The chain is Podocalyxin-like protein 2 (PODXL2) from Homo sapiens (Human).